The primary structure comprises 291 residues: 4-diphosphocytidyl-2-C-methyl-D-erythritol kinase (291 aa).

Lys10 is an active-site residue. 94–104 (PVSAGLAGGSS) provides a ligand contact to ATP. The active site involves Asp136.

Belongs to the GHMP kinase family. IspE subfamily.

The catalysed reaction is 4-CDP-2-C-methyl-D-erythritol + ATP = 4-CDP-2-C-methyl-D-erythritol 2-phosphate + ADP + H(+). It participates in isoprenoid biosynthesis; isopentenyl diphosphate biosynthesis via DXP pathway; isopentenyl diphosphate from 1-deoxy-D-xylulose 5-phosphate: step 3/6. Its function is as follows. Catalyzes the phosphorylation of the position 2 hydroxy group of 4-diphosphocytidyl-2C-methyl-D-erythritol. In Listeria monocytogenes serotype 4a (strain HCC23), this protein is 4-diphosphocytidyl-2-C-methyl-D-erythritol kinase.